A 372-amino-acid chain; its full sequence is Tetraacyldisaccharide 4'-kinase (372 aa).

60–67 (TVGGSGKT) serves as a coordination point for ATP.

It belongs to the LpxK family.

It catalyses the reaction a lipid A disaccharide + ATP = a lipid IVA + ADP + H(+). Its pathway is glycolipid biosynthesis; lipid IV(A) biosynthesis; lipid IV(A) from (3R)-3-hydroxytetradecanoyl-[acyl-carrier-protein] and UDP-N-acetyl-alpha-D-glucosamine: step 6/6. Functionally, transfers the gamma-phosphate of ATP to the 4'-position of a tetraacyldisaccharide 1-phosphate intermediate (termed DS-1-P) to form tetraacyldisaccharide 1,4'-bis-phosphate (lipid IVA). This chain is Tetraacyldisaccharide 4'-kinase, found in Psychrobacter cryohalolentis (strain ATCC BAA-1226 / DSM 17306 / VKM B-2378 / K5).